Here is a 634-residue protein sequence, read N- to C-terminus: MYDLLKTIDDPADLRRLDRRQLQPLADELRAFVLDSVSKTGGHLSSNLGTVELTIALHYVFNTPNDRIVWDVGHQTYPHKILTGRRDQMHSLRQYDGISGFPRRSESEYDTFGTAHSSTSISAALGMAIGSQLNGDDRFSIAVIGDGAMTAGMAFEAMNNAGVSEDAKLLVILNDNDMSISPPVGALNRHLARLMSGRFYAAARAGVERVLSVAPPVLELARKLEEHAKGMVVPATLFEEFGFNYIGPIDGHDLDSLIPTLQNIRELRGPQFLHVVTKKGQGYKLAEADPVLYHGPGKFNPAEGIKPSPTPAKKTYTQVFGEWLCDEAERDSRVVGITPAMREGSGMVEFEKRFKDRYYDVGIAEQHAVTFAGGLATEGLKPVVAIYSTFLQRAYDQLIHDVALQNLPVVFAIDRAGLVGADGATHAGAYDLAFMRCIPNMTIMAASDENECRQMLHTALQQPNPTAVRYPRGAGTGVATVKEFTEIPLGKGEVRRRTSQPEGKRVAILAFGTMVAPSLAAGEELDATVANMRFVKPVDAALVRELAETHDYLVTVEEGCVMGGAGSACVEALMESGVIRPVIQLGLPDQFIDHGDPAKLLAQCGLDGAGIAKSIRERFLSPAADVADQAKRVA.

Residues histidine 74 and 115-117 each bind thiamine diphosphate; that span reads AHS. Residue aspartate 146 coordinates Mg(2+). Residues 147 to 148, asparagine 176, tyrosine 283, and glutamate 365 each bind thiamine diphosphate; that span reads GA. Asparagine 176 serves as a coordination point for Mg(2+).

The protein belongs to the transketolase family. DXPS subfamily. Homodimer. Mg(2+) is required as a cofactor. Requires thiamine diphosphate as cofactor.

It catalyses the reaction D-glyceraldehyde 3-phosphate + pyruvate + H(+) = 1-deoxy-D-xylulose 5-phosphate + CO2. It participates in metabolic intermediate biosynthesis; 1-deoxy-D-xylulose 5-phosphate biosynthesis; 1-deoxy-D-xylulose 5-phosphate from D-glyceraldehyde 3-phosphate and pyruvate: step 1/1. Its function is as follows. Catalyzes the acyloin condensation reaction between C atoms 2 and 3 of pyruvate and glyceraldehyde 3-phosphate to yield 1-deoxy-D-xylulose-5-phosphate (DXP). This Burkholderia ambifaria (strain MC40-6) protein is 1-deoxy-D-xylulose-5-phosphate synthase.